Reading from the N-terminus, the 344-residue chain is Protein Tob2 (344 aa).

Disordered stretches follow at residues 144–169 (GSQDSSLSNSPSPSFGQSPSPTFIPR) and 191–225 (MKKGGGAASGGGVASSGAGGQQPPQQPRMARSPTN). Low complexity predominate over residues 145–164 (SQDSSLSNSPSPSFGQSPSP). Residues 194–210 (GGGAASGGGVASSGAGG) are compositionally biased toward gly residues. Residues 211 to 225 (QQPPQQPRMARSPTN) show a composition bias toward low complexity. A Phosphoserine modification is found at serine 254.

The protein belongs to the BTG family. Associates with CAF1. In terms of tissue distribution, ubiquitous.

The protein resides in the cytoplasm. In terms of biological role, anti-proliferative protein inhibits cell cycle progression from the G0/G1 to S phases. In Homo sapiens (Human), this protein is Protein Tob2 (TOB2).